A 370-amino-acid polypeptide reads, in one-letter code: tRNA 2-selenouridine synthase (370 aa).

A Rhodanese domain is found at 12-136 (FLDDVPMMDM…MRTFLLETTQ (125 aa)). Residue Cys95 is the S-selanylcysteine intermediate of the active site.

The protein belongs to the SelU family. As to quaternary structure, monomer.

It catalyses the reaction 5-methylaminomethyl-2-thiouridine(34) in tRNA + selenophosphate + (2E)-geranyl diphosphate + H2O + H(+) = 5-methylaminomethyl-2-selenouridine(34) in tRNA + (2E)-thiogeraniol + phosphate + diphosphate. It carries out the reaction 5-methylaminomethyl-2-thiouridine(34) in tRNA + (2E)-geranyl diphosphate = 5-methylaminomethyl-S-(2E)-geranyl-thiouridine(34) in tRNA + diphosphate. The enzyme catalyses 5-methylaminomethyl-S-(2E)-geranyl-thiouridine(34) in tRNA + selenophosphate + H(+) = 5-methylaminomethyl-2-(Se-phospho)selenouridine(34) in tRNA + (2E)-thiogeraniol. The catalysed reaction is 5-methylaminomethyl-2-(Se-phospho)selenouridine(34) in tRNA + H2O = 5-methylaminomethyl-2-selenouridine(34) in tRNA + phosphate. Functionally, involved in the post-transcriptional modification of the uridine at the wobble position (U34) of tRNA(Lys), tRNA(Glu) and tRNA(Gln). Catalyzes the conversion of 2-thiouridine (S2U-RNA) to 2-selenouridine (Se2U-RNA). Acts in a two-step process involving geranylation of 2-thiouridine (S2U) to S-geranyl-2-thiouridine (geS2U) and subsequent selenation of the latter derivative to 2-selenouridine (Se2U) in the tRNA chain. This Pseudomonas putida (strain ATCC 47054 / DSM 6125 / CFBP 8728 / NCIMB 11950 / KT2440) protein is tRNA 2-selenouridine synthase.